A 440-amino-acid polypeptide reads, in one-letter code: 2-phosphinomethylmalate synthase (440 aa).

The 275-residue stretch at 39 to 313 folds into the Pyruvate carboxyltransferase domain; the sequence is VWLSETTHRD…GARVNLPAVN (275 aa).

This sequence belongs to the alpha-IPM synthase/homocitrate synthase family. In terms of assembly, homodimer. It depends on Mn(2+) as a cofactor. The cofactor is Co(2+).

The catalysed reaction is 3-(hydrohydroxyphosphoryl)pyruvate + acetyl-CoA + H2O = phosphinomethylmalate + CoA + H(+). It participates in secondary metabolite biosynthesis; bialaphos biosynthesis. Strongly inhibited by p-chloromercuribenzoate (pCMB), iodoacetamide (IA) and EDTA. Its function is as follows. Involved in the biosynthesis of phosphinothricin tripeptide (PTT), also known as bialaphos (BA), a natural-product antibiotic and potent herbicide. Catalyzes the condensation berween phosphinopyruvic acid (PPA), an analog of oxalacetic acid, and acetyl-CoA to form R-2-phosphinomethylmalic acid (PMM). Can also act on oxaloacetate, but shows no activity when acetyl-CoA is substituted by propionyl-CoA or butyryl-CoA. The sequence is that of 2-phosphinomethylmalate synthase from Streptomyces hygroscopicus.